The sequence spans 67 residues: uncharacterized protein (67 aa).

The protein to E.coli YbdD.

This is an uncharacterized protein from Escherichia coli O157:H7.